We begin with the raw amino-acid sequence, 319 residues long: Beta-ketoacyl-[acyl-carrier-protein] synthase III (319 aa).

Residues Cys113 and His246 contribute to the active site. Positions 247–251 are ACP-binding; that stretch reads QANIR. Asn276 is a catalytic residue.

Belongs to the thiolase-like superfamily. FabH family. Homodimer.

The protein resides in the cytoplasm. The enzyme catalyses malonyl-[ACP] + acetyl-CoA + H(+) = 3-oxobutanoyl-[ACP] + CO2 + CoA. It participates in lipid metabolism; fatty acid biosynthesis. Functionally, catalyzes the condensation reaction of fatty acid synthesis by the addition to an acyl acceptor of two carbons from malonyl-ACP. Catalyzes the first condensation reaction which initiates fatty acid synthesis and may therefore play a role in governing the total rate of fatty acid production. Possesses both acetoacetyl-ACP synthase and acetyl transacylase activities. Its substrate specificity determines the biosynthesis of branched-chain and/or straight-chain of fatty acids. The protein is Beta-ketoacyl-[acyl-carrier-protein] synthase III of Ehrlichia ruminantium (strain Welgevonden).